A 191-amino-acid polypeptide reads, in one-letter code: Imidazoleglycerol-phosphate dehydratase (191 aa).

This sequence belongs to the imidazoleglycerol-phosphate dehydratase family.

It localises to the cytoplasm. The enzyme catalyses D-erythro-1-(imidazol-4-yl)glycerol 3-phosphate = 3-(imidazol-4-yl)-2-oxopropyl phosphate + H2O. It participates in amino-acid biosynthesis; L-histidine biosynthesis; L-histidine from 5-phospho-alpha-D-ribose 1-diphosphate: step 6/9. The protein is Imidazoleglycerol-phosphate dehydratase of Methanosarcina barkeri (strain Fusaro / DSM 804).